The chain runs to 205 residues: Ras-like protein 3 (205 aa).

16–23 serves as a coordination point for GTP; sequence GGGGVGKS. Positions 38–46 match the Effector region motif; it reads YDPTIEDSY. GTP contacts are provided by residues 63–67 and 122–125; these read DTAGQ and NKCD. Position 202 is a cysteine methyl ester (Cys-202). Cys-202 carries the S-farnesyl cysteine lipid modification. Positions 203 to 205 are cleaved as a propeptide — removed in mature form; that stretch reads ILM.

This sequence belongs to the small GTPase superfamily. Ras family.

The protein localises to the cell membrane. It catalyses the reaction GTP + H2O = GDP + phosphate + H(+). With respect to regulation, alternates between an inactive form bound to GDP and an active form bound to GTP. Activated by a guanine nucleotide-exchange factor (GEF) and inactivated by a GTPase-activating protein (GAP). This Mucor circinelloides f. lusitanicus (Mucor racemosus var. lusitanicus) protein is Ras-like protein 3 (RAS3).